We begin with the raw amino-acid sequence, 439 residues long: High-energy light unresponsive protein 1 (439 aa).

Residues 1–67 (MPPPSSHSNI…LGLNQSIRPN (67 aa)) lie on the Cytoplasmic side of the membrane. Residues 68-88 (NSLLFRIYSWLVFCLLLFTTL) form a helical membrane-spanning segment. Over 89–114 (RKFNQVGVRPNGTRENLQEFFANPRS) the chain is Extracellular. The helical transmembrane segment at 115–135 (MITLCNALIMLSGLLASLQLY) threads the bilayer. Residues 136 to 164 (TLGAKRLKPLKILCQFSLNVRTKQAERRQ) lie on the Cytoplasmic side of the membrane. A helical transmembrane segment spans residues 165 to 185 (FMINTFLAVFSGLLALTMAAT). At 186-211 (YAMSKWGYILYIVGTPNLDTETIFCV) the chain is on the extracellular side. A helical membrane pass occupies residues 212–232 (LLDSYALFVSRAAISALAILF). The Cytoplasmic segment spans residues 233-290 (YQHCSVIRRSIKHLINEMVPAEQDECPLPESSLQKIHDCQISYQRIFNGKAVIEEYYS). Residues 291-311 (FVLFYSYGVCIPIFCFLMFVG) form a helical membrane-spanning segment. Residues 312–324 (MSAQSICWSEVVS) are Extracellular-facing. A helical transmembrane segment spans residues 325 to 345 (IVIWIVNAILVLLLFSLPAFM). At 346-402 (INEDGDRLVASSFRMYHETFHEERDLTVLSQMTFFTFQIHSTKLTLSACNYFYMDRS) the chain is on the cytoplasmic side. The chain crosses the membrane as a helical span at residues 403-423 (ILLSLFSAILTYFLILWEFDI). Topologically, residues 424–439 (KNNQSLQNIANHTIHT) are extracellular.

The protein belongs to the insect chemoreceptor superfamily. Gustatory receptor (GR) family. As to expression, expressed in the AVG and PVT neurons of the tail.

Its subcellular location is the cell membrane. Its function is as follows. Photoreceptor for short wavelength (UV) light that mediates UV-light-induced avoidance behavior. Directly senses and absorbs both UV-A and UV-B light with very high efficiency. Absorption of UV-B but not UV-A light shows resistance to photobleaching. In contrast to other photoreceptors, does not use a prosthetic chromophore to capture photons and only depends on its protein conformation. Might have a role in response to white light exposure. The chain is High-energy light unresponsive protein 1 from Caenorhabditis elegans.